The sequence spans 404 residues: Probable tRNA sulfurtransferase (404 aa).

The region spanning T60–T165 is the THUMP domain. ATP contacts are provided by residues M183–L184, H208–F209, R265, G287, and Q296.

It belongs to the ThiI family.

Its subcellular location is the cytoplasm. The enzyme catalyses [ThiI sulfur-carrier protein]-S-sulfanyl-L-cysteine + a uridine in tRNA + 2 reduced [2Fe-2S]-[ferredoxin] + ATP + H(+) = [ThiI sulfur-carrier protein]-L-cysteine + a 4-thiouridine in tRNA + 2 oxidized [2Fe-2S]-[ferredoxin] + AMP + diphosphate. It carries out the reaction [ThiS sulfur-carrier protein]-C-terminal Gly-Gly-AMP + S-sulfanyl-L-cysteinyl-[cysteine desulfurase] + AH2 = [ThiS sulfur-carrier protein]-C-terminal-Gly-aminoethanethioate + L-cysteinyl-[cysteine desulfurase] + A + AMP + 2 H(+). The protein operates within cofactor biosynthesis; thiamine diphosphate biosynthesis. In terms of biological role, catalyzes the ATP-dependent transfer of a sulfur to tRNA to produce 4-thiouridine in position 8 of tRNAs, which functions as a near-UV photosensor. Also catalyzes the transfer of sulfur to the sulfur carrier protein ThiS, forming ThiS-thiocarboxylate. This is a step in the synthesis of thiazole, in the thiamine biosynthesis pathway. The sulfur is donated as persulfide by IscS. This is Probable tRNA sulfurtransferase from Streptococcus pneumoniae serotype 2 (strain D39 / NCTC 7466).